The primary structure comprises 729 residues: Phosphoribosylformylglycinamidine synthase subunit PurL (729 aa).

H54 is a catalytic residue. ATP is bound by residues Y57 and K96. A Mg(2+)-binding site is contributed by E98. Substrate contacts are provided by residues S99–H102 and R121. H100 serves as the catalytic Proton acceptor. A Mg(2+)-binding site is contributed by D122. Q245 serves as a coordination point for substrate. D273 is a binding site for Mg(2+). A substrate-binding site is contributed by E317–Q319. ATP-binding residues include D495 and G532. N533 is a binding site for Mg(2+). Position 535 (S535) interacts with substrate.

The protein belongs to the FGAMS family. As to quaternary structure, monomer. Part of the FGAM synthase complex composed of 1 PurL, 1 PurQ and 2 PurS subunits.

The protein resides in the cytoplasm. The catalysed reaction is N(2)-formyl-N(1)-(5-phospho-beta-D-ribosyl)glycinamide + L-glutamine + ATP + H2O = 2-formamido-N(1)-(5-O-phospho-beta-D-ribosyl)acetamidine + L-glutamate + ADP + phosphate + H(+). It functions in the pathway purine metabolism; IMP biosynthesis via de novo pathway; 5-amino-1-(5-phospho-D-ribosyl)imidazole from N(2)-formyl-N(1)-(5-phospho-D-ribosyl)glycinamide: step 1/2. In terms of biological role, part of the phosphoribosylformylglycinamidine synthase complex involved in the purines biosynthetic pathway. Catalyzes the ATP-dependent conversion of formylglycinamide ribonucleotide (FGAR) and glutamine to yield formylglycinamidine ribonucleotide (FGAM) and glutamate. The FGAM synthase complex is composed of three subunits. PurQ produces an ammonia molecule by converting glutamine to glutamate. PurL transfers the ammonia molecule to FGAR to form FGAM in an ATP-dependent manner. PurS interacts with PurQ and PurL and is thought to assist in the transfer of the ammonia molecule from PurQ to PurL. This is Phosphoribosylformylglycinamidine synthase subunit PurL from Staphylococcus epidermidis (strain ATCC 35984 / DSM 28319 / BCRC 17069 / CCUG 31568 / BM 3577 / RP62A).